A 771-amino-acid polypeptide reads, in one-letter code: DNA polymerase 1 (771 aa).

Belongs to the DNA polymerase type-B family.

The enzyme catalyses DNA(n) + a 2'-deoxyribonucleoside 5'-triphosphate = DNA(n+1) + diphosphate. The chain is DNA polymerase 1 (polI) from Pyrococcus abyssi (strain GE5 / Orsay).